Consider the following 347-residue polypeptide: DNA-directed RNA polymerase subunit alpha (347 aa).

Positions 1–226 (MLISQRPTLS…ELFGLARELN (226 aa)) are alpha N-terminal domain (alpha-NTD). Positions 241 to 347 (ADHIASFALP…DQDYAETEQL (107 aa)) are alpha C-terminal domain (alpha-CTD).

The protein belongs to the RNA polymerase alpha chain family. As to quaternary structure, homodimer. The RNAP catalytic core consists of 2 alpha, 1 beta, 1 beta' and 1 omega subunit. When a sigma factor is associated with the core the holoenzyme is formed, which can initiate transcription.

The enzyme catalyses RNA(n) + a ribonucleoside 5'-triphosphate = RNA(n+1) + diphosphate. Functionally, DNA-dependent RNA polymerase catalyzes the transcription of DNA into RNA using the four ribonucleoside triphosphates as substrates. The protein is DNA-directed RNA polymerase subunit alpha of Mycobacterium avium (strain 104).